We begin with the raw amino-acid sequence, 454 residues long: Bifunctional protein GlmU (454 aa).

The interval 1 to 232 (MTDRTCLSIV…VDNVIGINNR (232 aa)) is pyrophosphorylase. Residues 11-14 (LAAG), lysine 25, glutamine 78, and 83-84 (GT) each bind UDP-N-acetyl-alpha-D-glucosamine. Aspartate 108 is a Mg(2+) binding site. 4 residues coordinate UDP-N-acetyl-alpha-D-glucosamine: glycine 144, glutamate 158, asparagine 173, and asparagine 230. Asparagine 230 is a Mg(2+) binding site. The interval 233 to 253 (AELAEAETIWQNRKRRELMLS) is linker. The tract at residues 254–454 (GVTLIAPETV…AIKAAKSVSK (201 aa)) is N-acetyltransferase. UDP-N-acetyl-alpha-D-glucosamine contacts are provided by arginine 319 and lysine 337. Histidine 349 serves as the catalytic Proton acceptor. UDP-N-acetyl-alpha-D-glucosamine-binding residues include tyrosine 352 and asparagine 363. Residues alanine 366, 372–373 (NY), serine 391, serine 409, and arginine 426 each bind acetyl-CoA.

It in the N-terminal section; belongs to the N-acetylglucosamine-1-phosphate uridyltransferase family. This sequence in the C-terminal section; belongs to the transferase hexapeptide repeat family. Homotrimer. Mg(2+) is required as a cofactor.

Its subcellular location is the cytoplasm. The enzyme catalyses alpha-D-glucosamine 1-phosphate + acetyl-CoA = N-acetyl-alpha-D-glucosamine 1-phosphate + CoA + H(+). It carries out the reaction N-acetyl-alpha-D-glucosamine 1-phosphate + UTP + H(+) = UDP-N-acetyl-alpha-D-glucosamine + diphosphate. Its pathway is nucleotide-sugar biosynthesis; UDP-N-acetyl-alpha-D-glucosamine biosynthesis; N-acetyl-alpha-D-glucosamine 1-phosphate from alpha-D-glucosamine 6-phosphate (route II): step 2/2. It participates in nucleotide-sugar biosynthesis; UDP-N-acetyl-alpha-D-glucosamine biosynthesis; UDP-N-acetyl-alpha-D-glucosamine from N-acetyl-alpha-D-glucosamine 1-phosphate: step 1/1. It functions in the pathway bacterial outer membrane biogenesis; LPS lipid A biosynthesis. Its function is as follows. Catalyzes the last two sequential reactions in the de novo biosynthetic pathway for UDP-N-acetylglucosamine (UDP-GlcNAc). The C-terminal domain catalyzes the transfer of acetyl group from acetyl coenzyme A to glucosamine-1-phosphate (GlcN-1-P) to produce N-acetylglucosamine-1-phosphate (GlcNAc-1-P), which is converted into UDP-GlcNAc by the transfer of uridine 5-monophosphate (from uridine 5-triphosphate), a reaction catalyzed by the N-terminal domain. The chain is Bifunctional protein GlmU from Brucella abortus (strain S19).